Here is a 135-residue protein sequence, read N- to C-terminus: Ribosome-binding factor A (135 aa).

It belongs to the RbfA family. In terms of assembly, monomer. Binds 30S ribosomal subunits, but not 50S ribosomal subunits or 70S ribosomes.

Its subcellular location is the cytoplasm. Functionally, one of several proteins that assist in the late maturation steps of the functional core of the 30S ribosomal subunit. Associates with free 30S ribosomal subunits (but not with 30S subunits that are part of 70S ribosomes or polysomes). Required for efficient processing of 16S rRNA. May interact with the 5'-terminal helix region of 16S rRNA. The polypeptide is Ribosome-binding factor A (Rhodopseudomonas palustris (strain HaA2)).